The chain runs to 281 residues: N-methyltransferase tcpN (281 aa).

Belongs to the methyltransferase superfamily. LaeA methyltransferase family.

It participates in secondary metabolite biosynthesis. In terms of biological role, N-methyltransferase; part of the gene cluster that mediates the biosynthesis of an unusual class of epipolythiodioxopiperazines (ETPs) lacking the reactive thiol group important for toxicity. Firstly, L-tyrosine is prenylated by tcpD, before undergoing condensation with L-glycine in a reaction catalyzed by the NRPS tcpP leading to the diketopiperazine (DKP) backbone. Afterwards the alpha-carbon of tyrosine is oxidized by the cytochrome P450 tcpC to form a hydroxyl group. However, in contrast other ETP biosynthesis pathways studied so far, tcpC is not able to bishydroxylate the DKP at both alpha-carbon positions, but hydroxylates the alpha-carbon of the tyrosine part and the nitrogen of the glycine part. The next steps involve an alpha,beta-elimination reaction catalyzed by tcpI, a methylation by the methyltransferase tcpN the action of the four enzyme cascade tcpG/K/J/I. Due to a dysfunctional cytochrome P450 monooxygenase tcpC, the pathway leads to the biosynthesis of probable non-toxic metabolites lacking the reactive thiol group. This Claviceps purpurea (strain 20.1) (Ergot fungus) protein is N-methyltransferase tcpN.